The following is a 243-amino-acid chain: Small ribosomal subunit protein uS2 (243 aa).

Belongs to the universal ribosomal protein uS2 family.

The protein is Small ribosomal subunit protein uS2 of Chromobacterium violaceum (strain ATCC 12472 / DSM 30191 / JCM 1249 / CCUG 213 / NBRC 12614 / NCIMB 9131 / NCTC 9757 / MK).